The following is a 159-amino-acid chain: Phosphopantetheine adenylyltransferase (159 aa).

Threonine 10 is a substrate binding site. ATP contacts are provided by residues 10–11 (TF) and histidine 18. Positions 42, 74, and 88 each coordinate substrate. ATP contacts are provided by residues 89–91 (GLR), glutamate 99, and 124–130 (WSFISSS).

This sequence belongs to the bacterial CoaD family. As to quaternary structure, homohexamer. The cofactor is Mg(2+).

The protein resides in the cytoplasm. It carries out the reaction (R)-4'-phosphopantetheine + ATP + H(+) = 3'-dephospho-CoA + diphosphate. It participates in cofactor biosynthesis; coenzyme A biosynthesis; CoA from (R)-pantothenate: step 4/5. In terms of biological role, reversibly transfers an adenylyl group from ATP to 4'-phosphopantetheine, yielding dephospho-CoA (dPCoA) and pyrophosphate. This chain is Phosphopantetheine adenylyltransferase, found in Shigella sonnei (strain Ss046).